Consider the following 124-residue polypeptide: Ribonuclease pancreatic (124 aa).

Residues Ser1–Met13 are compositionally biased toward basic and acidic residues. A disordered region spans residues Ser1–Ser23. Residues Lys7 and Arg10 each coordinate substrate. His12 acts as the Proton acceptor in catalysis. 4 disulfides stabilise this stretch: Cys26–Cys84, Cys40–Cys95, Cys58–Cys110, and Cys65–Cys72. Residues Lys41–Thr45, Lys66, and Arg85 each bind substrate. His119 functions as the Proton donor in the catalytic mechanism.

This sequence belongs to the pancreatic ribonuclease family. In terms of assembly, monomer. Interacts with and forms tight 1:1 complexes with RNH1. Dimerization of two such complexes may occur. Interaction with RNH1 inhibits this protein. In terms of tissue distribution, pancreas.

The protein resides in the secreted. The enzyme catalyses an [RNA] containing cytidine + H2O = an [RNA]-3'-cytidine-3'-phosphate + a 5'-hydroxy-ribonucleotide-3'-[RNA].. It catalyses the reaction an [RNA] containing uridine + H2O = an [RNA]-3'-uridine-3'-phosphate + a 5'-hydroxy-ribonucleotide-3'-[RNA].. In terms of biological role, endonuclease that catalyzes the cleavage of RNA on the 3' side of pyrimidine nucleotides. Acts on single-stranded and double-stranded RNA. This chain is Ribonuclease pancreatic (RNASE1), found in Camelus bactrianus (Bactrian camel).